The sequence spans 236 residues: RING-H2 finger protein ATL7 (236 aa).

The chain crosses the membrane as a helical span at residues 31–51 (AFIFSVPICFTFIVLFVLYVI). An RING-type; atypical zinc finger spans residues 111-153 (CSVCLGDYQAEEKLQQMPSCGHTFHMECIDLWLTSHTTCPLCR). The span at 176-196 (ENSNGGEASTQPDSQSATEAI) shows a compositional bias: polar residues. Positions 176-236 (ENSNGGEAST…SDGCCTCRLG (61 aa)) are disordered. Basic and acidic residues predominate over residues 197 to 221 (SHTDDVEEGNRDSQEVSKETEENDR).

The protein belongs to the RING-type zinc finger family. ATL subfamily.

The protein localises to the membrane. The enzyme catalyses S-ubiquitinyl-[E2 ubiquitin-conjugating enzyme]-L-cysteine + [acceptor protein]-L-lysine = [E2 ubiquitin-conjugating enzyme]-L-cysteine + N(6)-ubiquitinyl-[acceptor protein]-L-lysine.. Its pathway is protein modification; protein ubiquitination. This Arabidopsis thaliana (Mouse-ear cress) protein is RING-H2 finger protein ATL7 (ATL7).